A 73-amino-acid chain; its full sequence is Protein WFDC10B (73 aa).

The first 21 residues, 1–21 (MAPQTLLLVLVLCVLLLQAQG), serve as a signal peptide directing secretion. The WAP domain maps to 28–73 (RMQRIKVCEKRPSIDLCIHHCSYFQKCETNKICCSAFCGNICMSIL).

In terms of tissue distribution, ubiquitously expressed.

The protein localises to the secreted. The polypeptide is Protein WFDC10B (WFDC10B) (Homo sapiens (Human)).